The sequence spans 429 residues: Dual-specificity RNA methyltransferase RlmN (429 aa).

The tract at residues 1–23 (MRAMQTHTEIAPMPIPGHVDPVP) is disordered. E128 functions as the Proton acceptor in the catalytic mechanism. The region spanning 134–397 (DADRGTLCVS…APVRTPRGRD (264 aa)) is the Radical SAM core domain. A disulfide bridge connects residues C141 and C402. 3 residues coordinate [4Fe-4S] cluster: C148, C152, and C155. Residues 226–227 (GE), S258, 280–282 (SLH), and N359 each bind S-adenosyl-L-methionine. The S-methylcysteine intermediate role is filled by C402.

Belongs to the radical SAM superfamily. RlmN family. It depends on [4Fe-4S] cluster as a cofactor.

It localises to the cytoplasm. It catalyses the reaction adenosine(2503) in 23S rRNA + 2 reduced [2Fe-2S]-[ferredoxin] + 2 S-adenosyl-L-methionine = 2-methyladenosine(2503) in 23S rRNA + 5'-deoxyadenosine + L-methionine + 2 oxidized [2Fe-2S]-[ferredoxin] + S-adenosyl-L-homocysteine. The enzyme catalyses adenosine(37) in tRNA + 2 reduced [2Fe-2S]-[ferredoxin] + 2 S-adenosyl-L-methionine = 2-methyladenosine(37) in tRNA + 5'-deoxyadenosine + L-methionine + 2 oxidized [2Fe-2S]-[ferredoxin] + S-adenosyl-L-homocysteine. Functionally, specifically methylates position 2 of adenine 2503 in 23S rRNA and position 2 of adenine 37 in tRNAs. m2A2503 modification seems to play a crucial role in the proofreading step occurring at the peptidyl transferase center and thus would serve to optimize ribosomal fidelity. In Novosphingobium aromaticivorans (strain ATCC 700278 / DSM 12444 / CCUG 56034 / CIP 105152 / NBRC 16084 / F199), this protein is Dual-specificity RNA methyltransferase RlmN.